Here is a 646-residue protein sequence, read N- to C-terminus: Cysteine-rich receptor-like protein kinase 37 (646 aa).

The first 26 residues, methionine 1 to alanine 26, serve as a signal peptide directing secretion. Gnk2-homologous domains lie at glycine 27–threonine 132 and threonine 142–tyrosine 252. Residues glycine 27–asparagine 287 lie on the Extracellular side of the membrane. 4 N-linked (GlcNAc...) asparagine glycosylation sites follow: asparagine 62, asparagine 129, asparagine 169, and asparagine 180. A helical transmembrane segment spans residues isoleucine 288–serine 308. At tryptophan 309–histidine 646 the chain is on the cytoplasmic side. In terms of domain architecture, Protein kinase spans phenylalanine 345–isoleucine 626. ATP is bound by residues leucine 351–valine 359 and lysine 373. Tyrosine 418 carries the post-translational modification Phosphotyrosine. Aspartate 470 functions as the Proton acceptor in the catalytic mechanism. Residue serine 474 is modified to Phosphoserine. At threonine 510 the chain carries Phosphothreonine. The residue at position 518 (tyrosine 518) is a Phosphotyrosine.

The protein belongs to the protein kinase superfamily. Ser/Thr protein kinase family. CRK subfamily.

The protein localises to the membrane. The enzyme catalyses L-seryl-[protein] + ATP = O-phospho-L-seryl-[protein] + ADP + H(+). The catalysed reaction is L-threonyl-[protein] + ATP = O-phospho-L-threonyl-[protein] + ADP + H(+). This chain is Cysteine-rich receptor-like protein kinase 37 (CRK37), found in Arabidopsis thaliana (Mouse-ear cress).